Consider the following 212-residue polypeptide: MEYCLAAAALNGVDRRSLQRSARLGREVLERAKRRAVDWHSPERSRGNVGVLYRQGPYQERWSVPGSQRLLGEREERCPTLSSSFGAMAEFMDYTSSQCGKYYLSMPEEGGATHVYRYHRRKPPEMHMYSDTGHSQEQRNCRGETSVGQESIYQTSEHSQESSWPTENISKDLYIEVYPGTYSVTVGSSALSKKTHVVAVDPGQSVDLVFPV.

In terms of assembly, interacts with PRKACA and RELA.

It is found in the nucleus. In terms of biological role, enhances NF-kappa-B transcriptional activity by regulating the nuclear localization of the NF-kappa-B subunit RELA and promoting the phosphorylation of RELA by PRKACA. Regulates the effect of the cAMP-dependent protein kinase signaling pathway on the NF-kappa-B activation cascade. This is A-kinase-interacting protein 1 (Akip1) from Mus musculus (Mouse).